Reading from the N-terminus, the 352-residue chain is Nuclear receptor subfamily 1 group I member 3 (352 aa).

Residues 8–83 (LRNCVVCGDQ…AGMRKDMILS (76 aa)) constitute a DNA-binding region (nuclear receptor). Residues 11 to 31 (CVVCGDQATGYHFNALTCEGC) form an NR C4-type zinc finger. Thr-38 carries the phosphothreonine; by PKC modification. The NR C4-type zinc-finger motif lies at 47 to 71 (CPFAGSCEVSKIQRRHCPACRLQKC). An NR LBD domain is found at 109 to 352 (EQEELIQTLL…MMPLLQEICS (244 aa)).

The protein belongs to the nuclear hormone receptor family. NR1 subfamily. In terms of assembly, heterodimer of NR1I3 and RXR. Interacts with PSMC4. Interacts with ECT2. Directly interacts with DNAJC7; this complex may also include HSP90. Interacts with CRY1. Interacts with CRY2 in a ligand-dependent manner. Post-translationally, phosphorylated at Thr-38 by PKC, dephosphorylation of Thr-38 is required for nuclear translocation and activation.

The protein localises to the nucleus. It is found in the cytoplasm. It localises to the cytoskeleton. Its function is as follows. Binds and transactivates the retinoic acid response elements that control expression of the retinoic acid receptor beta 2 and alcohol dehydrogenase 3 genes. Transactivates both the phenobarbital responsive element module of the human CYP2B6 gene and the CYP3A4 xenobiotic response element. This Macaca mulatta (Rhesus macaque) protein is Nuclear receptor subfamily 1 group I member 3 (NR1I3).